A 488-amino-acid chain; its full sequence is 1-deoxy-D-xylulose 5-phosphate reductoisomerase, apicoplastic (488 aa).

Residues 1-72 (MKKYIYIYFF…LCKKDLIDIG (72 aa)) constitute an apicoplast transit peptide. NADP(+) contacts are provided by residues 86–89 (TGSI) and 115–117 (NKS). Position 205 (Lys-205) interacts with 1-deoxy-D-xylulose 5-phosphate. Glu-206 is a binding site for NADP(+). Residue Asp-231 participates in Mn(2+) binding. 1-deoxy-D-xylulose 5-phosphate is bound by residues Ser-232, Glu-233, Ser-270, and His-293. A Mn(2+)-binding site is contributed by Glu-233. Gly-299 is an NADP(+) binding site. 1-deoxy-D-xylulose 5-phosphate contacts are provided by Ser-306, Asn-311, Lys-312, and Glu-315. Glu-315 is a Mn(2+) binding site.

The protein belongs to the DXR family. In terms of assembly, homodimer. It depends on Mg(2+) as a cofactor. Mn(2+) serves as cofactor.

Its subcellular location is the plastid. The protein localises to the apicoplast. It carries out the reaction 2-C-methyl-D-erythritol 4-phosphate + NADP(+) = 1-deoxy-D-xylulose 5-phosphate + NADPH + H(+). Its pathway is isoprenoid biosynthesis; isopentenyl diphosphate biosynthesis via DXP pathway; isopentenyl diphosphate from 1-deoxy-D-xylulose 5-phosphate: step 1/6. Inhibited by fosmidomycin and its derivatives. Its function is as follows. Catalyzes the NADPH-dependent rearrangement and reduction of 1-deoxy-D-xylulose-5-phosphate (DXP) to 2-C-methyl-D-erythritol 4-phosphate (MEP). This Plasmodium falciparum (isolate 3D7) protein is 1-deoxy-D-xylulose 5-phosphate reductoisomerase, apicoplastic (DXR).